The primary structure comprises 550 residues: Chaperonin GroEL (550 aa).

Residues Thr30 to Pro33, Lys51, Asp87 to Thr91, Gly416, Asn480 to Ala482, and Asp496 contribute to the ATP site. Positions Leu525–Met550 are disordered. Residues Gly534–Met550 show a composition bias toward gly residues.

It belongs to the chaperonin (HSP60) family. In terms of assembly, forms a cylinder of 14 subunits composed of two heptameric rings stacked back-to-back. Interacts with the co-chaperonin GroES.

Its subcellular location is the cytoplasm. The enzyme catalyses ATP + H2O + a folded polypeptide = ADP + phosphate + an unfolded polypeptide.. Together with its co-chaperonin GroES, plays an essential role in assisting protein folding. The GroEL-GroES system forms a nano-cage that allows encapsulation of the non-native substrate proteins and provides a physical environment optimized to promote and accelerate protein folding. This Halorhodospira halophila (strain DSM 244 / SL1) (Ectothiorhodospira halophila (strain DSM 244 / SL1)) protein is Chaperonin GroEL.